The chain runs to 105 residues: MRKFETLLLLSPELSPDAREALLVKLVSIIEKNKGQFTVNHWGMRDLAYPVQKHMRGYYVLLEYTTYPNIIEELERIIRITNGIFKFMTIKLEEHIEEKQLEEVV.

Belongs to the bacterial ribosomal protein bS6 family.

Binds together with bS18 to 16S ribosomal RNA. The sequence is that of Small ribosomal subunit protein bS6 from Lawsonia intracellularis (strain PHE/MN1-00).